Consider the following 518-residue polypeptide: Receptor-interacting serine/threonine-protein kinase 3 (518 aa).

S2 carries the post-translational modification Phosphoserine. Residues 21–287 (LENQELVGKG…ECLPKTDEVF (267 aa)) form the Protein kinase domain. 27–35 (VGKGGFGTV) provides a ligand contact to ATP. K42 is covalently cross-linked (Glycyl lysine isopeptide (Lys-Gly) (interchain with G-Cter in ubiquitin)). K50 is an ATP binding site. The active-site Proton acceptor is the D142. Residue S164 is modified to Phosphoserine. T182 is modified (phosphothreonine). Phosphoserine; by autocatalysis occurs at positions 199 and 227. Residue T252 is modified to Phosphothreonine. Residue S299 is modified to Phosphoserine. T333 is subject to Phosphothreonine. Residues K351 and K363 each participate in a glycyl lysine isopeptide (Lys-Gly) (interchain with G-Cter in ubiquitin) cross-link. The tract at residues 355–443 (EEPPSSVPKK…WSCRTPEPNP (89 aa)) is disordered. Positions 384 to 408 (TAGTSSDSMAQPPQTPETSTFRNQM) are enriched in polar residues. S389 is modified (phosphoserine). T401 is modified (phosphothreonine). Residues 450–466 (VNIYNCSGVQVGDNNYL) carry the RIP homotypic interaction motif (RHIM) motif. The disordered stretch occupies residues 476-518 (TWGLAPSGKGRGLQHPPPVGSQEGPKDPEAWSRPQGWYNHSGK). Residue K518 forms a Glycyl lysine isopeptide (Lys-Gly) (interchain with G-Cter in ubiquitin) linkage.

Belongs to the protein kinase superfamily. TKL Ser/Thr protein kinase family. As to quaternary structure, interacts (via RIP homotypic interaction motif) with RIPK1 (via RIP homotypic interaction motif); this interaction induces RIPK1 phosphorylation and formation of a RIPK1-RIPK3 necrosis-inducing complex. Interacts with MLKL; the interaction is direct and triggers necroptosis. Interacts with ZBP1 (via RIP homotypic interaction motif); interaction with ZBP1 activates RIPK3, triggering necroptosis. Upon TNF-induced necrosis, the RIPK1-RIPK3 dimer further interacts with PGAM5 and MLKL; the formation of this complex leads to PGAM5 phosphorylation and increase in PGAM5 phosphatase activity. Binds TRAF2 and is recruited to the TNFR-1 signaling complex. Interacts with PYGL, GLUL and GLUD1; these interactions result in activation of these metabolic enzymes. Interacts with BIRC2/c-IAP1, BIRC3/c-IAP2 and XIAP/BIRC4. Interacts with ARHGEF2. Interacts with PELI1 (via atypical FHA domain); the phosphorylated form at Thr-182 binds preferentially to PELI1. Interacts with BUB1B, TRAF2 and STUB1. Interacts with CASP6. Component of the AIM2 PANoptosome complex, a multiprotein complex that drives inflammatory cell death (PANoptosis). In terms of assembly, (Microbial infection) Interacts (via RIP homotypic interaction motif/RHIM) with herpes simplex virus 1/HHV-1 protein RIR1/ICP6 (via RHIM); this interaction may induce heteromeric amyloid assemblies and prevent necroptosis activation. (Microbial infection) Interacts (via RIP homotypic interaction motif/RHIM) with herpes simplex virus 2/HHV-2 protein RIR1/ICP10 (via RHIM); this interaction prevents necroptosis activation. Post-translationally, (Microbial infection) Proteolytically cleaved by S.flexneri OspD3 within the RIP homotypic interaction motif (RHIM), leading to its degradation and inhibition of necroptosis. In terms of processing, RIPK1 and RIPK3 undergo reciprocal auto- and trans-phosphorylation. Autophosphorylated following interaction with ZBP1. Phosphorylation of Ser-199 plays a role in the necroptotic function of RIPK3. Autophosphorylates at Ser-227 following activation by ZBP1: phosphorylation at these sites is a hallmark of necroptosis and is required for binding MLKL. Phosphorylation at Thr-182 is important for its kinase activity, interaction with PELI1 and PELI1-mediated 'Lys-48'-linked polyubiquitination and for its ability to mediate TNF-induced necroptosis. Polyubiquitinated with 'Lys-48' and 'Lys-63'-linked chains by BIRC2/c-IAP1 and BIRC3/c-IAP2, leading to activation of NF-kappa-B. Polyubiquitinated with 'Lys-48'-linked chains by PELI1 leading to its subsequent proteasome-dependent degradation. Ubiquitinated by STUB1 leading to its subsequent proteasome-dependent degradation. Deubiquitinated by USP22. Highly expressed in the pancreas. Detected at lower levels in heart, placenta, lung and kidney. As to expression, expression is significantly increased in colon and lung cancers.

Its subcellular location is the cytoplasm. The protein resides in the cytosol. It localises to the nucleus. The enzyme catalyses L-seryl-[protein] + ATP = O-phospho-L-seryl-[protein] + ADP + H(+). It catalyses the reaction L-threonyl-[protein] + ATP = O-phospho-L-threonyl-[protein] + ADP + H(+). With respect to regulation, activity is stimulated by ZBP1, which senses double-stranded Z-RNA structures. RIPK3-dependent necroptosis is inhibited by RIPK1: RIPK1 prevents the ZBP1-induced activation of RIPK3 via FADD-mediated recruitment of CASP8, which cleaves RIPK1 and limits TNF-induced necroptosis. Serine/threonine-protein kinase that activates necroptosis and apoptosis, two parallel forms of cell death. Necroptosis, a programmed cell death process in response to death-inducing TNF-alpha family members, is triggered by RIPK3 following activation by ZBP1. Activated RIPK3 forms a necrosis-inducing complex and mediates phosphorylation of MLKL, promoting MLKL localization to the plasma membrane and execution of programmed necrosis characterized by calcium influx and plasma membrane damage. In addition to TNF-induced necroptosis, necroptosis can also take place in the nucleus in response to orthomyxoviruses infection: following ZBP1 activation, which senses double-stranded Z-RNA structures, nuclear RIPK3 catalyzes phosphorylation and activation of MLKL, promoting disruption of the nuclear envelope and leakage of cellular DNA into the cytosol. Also regulates apoptosis: apoptosis depends on RIPK1, FADD and CASP8, and is independent of MLKL and RIPK3 kinase activity. Phosphorylates RIPK1: RIPK1 and RIPK3 undergo reciprocal auto- and trans-phosphorylation. In some cell types, also able to restrict viral replication by promoting cell death-independent responses. In response to Zika virus infection in neurons, promotes a cell death-independent pathway that restricts viral replication: together with ZBP1, promotes a death-independent transcriptional program that modifies the cellular metabolism via up-regulation expression of the enzyme ACOD1/IRG1 and production of the metabolite itaconate. Itaconate inhibits the activity of succinate dehydrogenase, generating a metabolic state in neurons that suppresses replication of viral genomes. RIPK3 binds to and enhances the activity of three metabolic enzymes: GLUL, GLUD1, and PYGL. These metabolic enzymes may eventually stimulate the tricarboxylic acid cycle and oxidative phosphorylation, which could result in enhanced ROS production. Functionally, (Microbial infection) In case of herpes simplex virus 1/HHV-1 infection, forms heteromeric amyloid structures with HHV-1 protein RIR1/ICP6 which may inhibit RIPK3-mediated necroptosis, thereby preventing host cell death pathway and allowing viral evasion. This chain is Receptor-interacting serine/threonine-protein kinase 3, found in Homo sapiens (Human).